The sequence spans 699 residues: Bifunctional protein GAL10 (699 aa).

The tract at residues 1-357 is galactowaldenase; the sequence is MTAQLQSEST…TTENPFGYQL (357 aa). Residue 13–44 coordinates NAD(+); the sequence is IVLVTGGAGYIGSHTVVELIENGYDCVVADNL. Positions 358–699 are mutarotase; the sequence is RGVEARFSAE…YGSKIVYRFS (342 aa). H537 acts as the For mutarotase activity in catalysis. Residue S562 is modified to Phosphoserine.

In the N-terminal section; belongs to the NAD(P)-dependent epimerase/dehydratase family. This sequence in the C-terminal section; belongs to the aldose epimerase family. NAD(+) is required as a cofactor.

The catalysed reaction is UDP-alpha-D-glucose = UDP-alpha-D-galactose. The enzyme catalyses alpha-D-glucose = beta-D-glucose. It functions in the pathway carbohydrate metabolism; galactose metabolism. The protein operates within carbohydrate metabolism; hexose metabolism. In terms of biological role, mutarotase converts alpha-aldose to the beta-anomer. It is active on D-glucose, L-arabinose, D-xylose, D-galactose, maltose and lactose. In Saccharomyces cerevisiae (strain ATCC 204508 / S288c) (Baker's yeast), this protein is Bifunctional protein GAL10 (GAL10).